Here is a 503-residue protein sequence, read N- to C-terminus: Cytochrome P450 3A9 (503 aa).

Position 442 (Cys442) interacts with heme.

This sequence belongs to the cytochrome P450 family. Requires heme as cofactor. As to expression, mainly expressed in olfactory epithelium.

The protein localises to the endoplasmic reticulum membrane. It is found in the microsome membrane. It carries out the reaction an organic molecule + reduced [NADPH--hemoprotein reductase] + O2 = an alcohol + oxidized [NADPH--hemoprotein reductase] + H2O + H(+). Functionally, this isozyme seems to be implicated in olfaction. Active in the demethylation of erythromycin as well as benzphetamine. This Rattus norvegicus (Rat) protein is Cytochrome P450 3A9 (Cyp3a9).